The primary structure comprises 799 residues: Rho GTPase-activating protein gacI (799 aa).

Positions 226–451 constitute a Rho-GAP domain; that stretch reads IKLEEVFARE…LLVEHVLTIF (226 aa). Positions 472 to 520 are enriched in polar residues; it reads RSQSDISSQTKPLPSLPTSPQNRSAIITGDSSSPSLNTPPVKSSLNSSD. Disordered regions lie at residues 472–572 and 741–799; these read RSQS…PTSN and EKQQ…LSNQ. Low complexity predominate over residues 525 to 549; it reads DNGSNNNNNNNTTNTITNNGIADTA. A compositionally biased stretch (pro residues) spans 550 to 568; that stretch reads TPPPPTTPTAPTTPPPPTT. Composition is skewed to low complexity over residues 743–752 and 759–791; these read QQQQQQQQTN and ISSN…LNSS.

The protein resides in the cytoplasm. Rho GTPase-activating protein involved in the signal transduction pathway. In Dictyostelium discoideum (Social amoeba), this protein is Rho GTPase-activating protein gacI (gacI).